Consider the following 261-residue polypeptide: Segregation and condensation protein A (261 aa).

This sequence belongs to the ScpA family. In terms of assembly, component of a cohesin-like complex composed of ScpA, ScpB and the Smc homodimer, in which ScpA and ScpB bind to the head domain of Smc. The presence of the three proteins is required for the association of the complex with DNA.

The protein localises to the cytoplasm. In terms of biological role, participates in chromosomal partition during cell division. May act via the formation of a condensin-like complex containing Smc and ScpB that pull DNA away from mid-cell into both cell halves. This chain is Segregation and condensation protein A, found in Desulfitobacterium hafniense (strain DSM 10664 / DCB-2).